The chain runs to 334 residues: MASVLHKLITPLACSSPEPPRNKVTVVGVGQVGMACAVTILLRELADELALVDVVEDKVKGEMMDLQHGSLFLKTPKIVADKDYSVTSNSRIVVVTAGVRQQEGERRLNLDQRNVNIFKHIIPLIVRHSPDCIIIVVSNPVDVLTYVTWKLSGLPMHRVIGSGTNLDSARFRFLMADKLGIHSSSFNGWILGEHGDTSVPVWSGTNVAGVNLQTLNPNIGTDFDEENWKETHKMVVDSAYEVIKLKGYTNWAIGLSVADLTESLMRNMNRIHPVSTMAKGMYGIGDEVYLSLPCVLNSGGVGSVVNMTLTDEEVAQLQGSASTLWDIQKDLRDI.

Residues 30-58 (GQVG…VEDK) and arginine 100 contribute to the NAD(+) site. 3 residues coordinate substrate: arginine 107, asparagine 139, and arginine 170. NAD(+) is bound at residue asparagine 139. The Proton acceptor role is filled by histidine 194. Threonine 249 serves as a coordination point for substrate.

It belongs to the LDH/MDH superfamily. LDH family. Homotetramer. As to expression, eye and liver.

It is found in the cytoplasm. The catalysed reaction is (S)-lactate + NAD(+) = pyruvate + NADH + H(+). It participates in fermentation; pyruvate fermentation to lactate; (S)-lactate from pyruvate: step 1/1. The protein is L-lactate dehydrogenase C chain (ldhc) of Fundulus heteroclitus (Killifish).